Reading from the N-terminus, the 232-residue chain is Large ribosomal subunit protein uL1 (232 aa).

The protein belongs to the universal ribosomal protein uL1 family. In terms of assembly, part of the 50S ribosomal subunit.

Binds directly to 23S rRNA. The L1 stalk is quite mobile in the ribosome, and is involved in E site tRNA release. In terms of biological role, protein L1 is also a translational repressor protein, it controls the translation of the L11 operon by binding to its mRNA. This is Large ribosomal subunit protein uL1 from Bartonella quintana (strain Toulouse) (Rochalimaea quintana).